Here is a 395-residue protein sequence, read N- to C-terminus: Succinyl-diaminopimelate desuccinylase (395 aa).

Histidine 74 provides a ligand contact to Zn(2+). The active site involves aspartate 76. Aspartate 107 serves as a coordination point for Zn(2+). The active-site Proton acceptor is glutamate 141. 3 residues coordinate Zn(2+): glutamate 142, glutamate 170, and histidine 368.

It belongs to the peptidase M20A family. DapE subfamily. In terms of assembly, homodimer. Requires Zn(2+) as cofactor. The cofactor is Co(2+).

The catalysed reaction is N-succinyl-(2S,6S)-2,6-diaminopimelate + H2O = (2S,6S)-2,6-diaminopimelate + succinate. Its pathway is amino-acid biosynthesis; L-lysine biosynthesis via DAP pathway; LL-2,6-diaminopimelate from (S)-tetrahydrodipicolinate (succinylase route): step 3/3. Its function is as follows. Catalyzes the hydrolysis of N-succinyl-L,L-diaminopimelic acid (SDAP), forming succinate and LL-2,6-diaminopimelate (DAP), an intermediate involved in the bacterial biosynthesis of lysine and meso-diaminopimelic acid, an essential component of bacterial cell walls. This Brucella melitensis biotype 2 (strain ATCC 23457) protein is Succinyl-diaminopimelate desuccinylase.